The primary structure comprises 327 residues: Nuclear apoptosis-inducing factor 1 (327 aa).

A required for nuclear localization and apoptosis-inducing activity region spans residues 1–70 (MAVPAKKRKM…CRRELPEVKK (70 aa)). Positions 88–98 (AAVEGGEAPGP) are enriched in low complexity. Disordered regions lie at residues 88–118 (AAVE…AGGP) and 303–327 (NMPN…SIIQ). The segment covering 104–117 (AGGPGTGGGSGAGG) has biased composition (gly residues). Positions 316–327 (VAQNGQPDSIIQ) are enriched in polar residues.

The protein belongs to the NAIF1 family. As to quaternary structure, interacts with HARBI1.

It localises to the nucleus. In terms of biological role, induces apoptosis. The chain is Nuclear apoptosis-inducing factor 1 (NAIF1) from Bos taurus (Bovine).